A 115-amino-acid polypeptide reads, in one-letter code: Large ribosomal subunit protein bL20 (115 aa).

It belongs to the bacterial ribosomal protein bL20 family.

Functionally, binds directly to 23S ribosomal RNA and is necessary for the in vitro assembly process of the 50S ribosomal subunit. It is not involved in the protein synthesizing functions of that subunit. In Chlorobium phaeovibrioides (strain DSM 265 / 1930) (Prosthecochloris vibrioformis (strain DSM 265)), this protein is Large ribosomal subunit protein bL20.